We begin with the raw amino-acid sequence, 88 residues long: Protein A19 homolog (88 aa).

The segment at 1–28 (MADSTAGAKKRKKRSTSATSTRKEPPTV) is disordered.

It belongs to the chordopoxvirinae A19 family.

The protein is Protein A19 homolog of Fowlpox virus (strain NVSL) (FPV).